Reading from the N-terminus, the 400-residue chain is Phosphoglycerate kinase (400 aa).

Substrate is bound by residues 19–21 (DLN), Arg-38, 61–64 (HLGR), Arg-124, and Arg-161. Residues Lys-211, Gly-299, Glu-330, and 356 to 359 (GGDS) each bind ATP.

The protein belongs to the phosphoglycerate kinase family. Monomer.

It is found in the cytoplasm. It carries out the reaction (2R)-3-phosphoglycerate + ATP = (2R)-3-phospho-glyceroyl phosphate + ADP. Its pathway is carbohydrate degradation; glycolysis; pyruvate from D-glyceraldehyde 3-phosphate: step 2/5. The sequence is that of Phosphoglycerate kinase from Parafrankia sp. (strain EAN1pec).